The chain runs to 112 residues: ATP synthase subunit c (112 aa).

2 consecutive transmembrane segments (helical) span residues 36 to 56 (FSVL…AIGM) and 81 to 101 (MFIA…IALI).

This sequence belongs to the ATPase C chain family. In terms of assembly, F-type ATPases have 2 components, F(1) - the catalytic core - and F(0) - the membrane proton channel. F(1) has five subunits: alpha(3), beta(3), gamma(1), delta(1), epsilon(1). F(0) has three main subunits: a(1), b(2) and c(10-14). The alpha and beta chains form an alternating ring which encloses part of the gamma chain. F(1) is attached to F(0) by a central stalk formed by the gamma and epsilon chains, while a peripheral stalk is formed by the delta and b chains.

It is found in the cell inner membrane. In terms of biological role, f(1)F(0) ATP synthase produces ATP from ADP in the presence of a proton or sodium gradient. F-type ATPases consist of two structural domains, F(1) containing the extramembraneous catalytic core and F(0) containing the membrane proton channel, linked together by a central stalk and a peripheral stalk. During catalysis, ATP synthesis in the catalytic domain of F(1) is coupled via a rotary mechanism of the central stalk subunits to proton translocation. Key component of the F(0) channel; it plays a direct role in translocation across the membrane. A homomeric c-ring of between 10-14 subunits forms the central stalk rotor element with the F(1) delta and epsilon subunits. This Campylobacter jejuni subsp. doylei (strain ATCC BAA-1458 / RM4099 / 269.97) protein is ATP synthase subunit c.